Here is a 362-residue protein sequence, read N- to C-terminus: Methylthioribose-1-phosphate isomerase (362 aa).

Residues 49–51 (RGA), R89, and Q201 each bind substrate. Residue D242 is the Proton donor of the active site. A substrate-binding site is contributed by 252–253 (NK).

It belongs to the eIF-2B alpha/beta/delta subunits family. MtnA subfamily.

It catalyses the reaction 5-(methylsulfanyl)-alpha-D-ribose 1-phosphate = 5-(methylsulfanyl)-D-ribulose 1-phosphate. Its pathway is amino-acid biosynthesis; L-methionine biosynthesis via salvage pathway; L-methionine from S-methyl-5-thio-alpha-D-ribose 1-phosphate: step 1/6. Functionally, catalyzes the interconversion of methylthioribose-1-phosphate (MTR-1-P) into methylthioribulose-1-phosphate (MTRu-1-P). This chain is Methylthioribose-1-phosphate isomerase, found in Leptospira borgpetersenii serovar Hardjo-bovis (strain JB197).